The sequence spans 316 residues: Rhomboid-related protein 4 (316 aa).

Topologically, residues 1–21 (MQRRTRGIDTGLLLLLSQVFH) are cytoplasmic. Residues 22–42 (IGINNIPPVTLATLAVNVWFF) traverse the membrane as a helical segment. Topologically, residues 43–103 (LNPWKPLYHS…KLEKRLGSRW (61 aa)) are extracellular. A helical membrane pass occupies residues 104–124 (FAYIIATFSLLTGVVYLLLQF). The Cytoplasmic portion of the chain corresponds to 125 to 137 (ASAELMNQPDFKR). A helical membrane pass occupies residues 138–154 (NCAVGFSGVLFALKVLS). Ser144 (nucleophile) is an active-site residue. The Extracellular portion of the chain corresponds to 155 to 182 (NHYCPGGFVNILGFPVPNRFACWAELAA). The helical transmembrane segment at 183–203 (IHFCTPGTSFAGHLAGILVGL) threads the bilayer. His195 is a catalytic residue. Residues 204–316 (MYTQGPLKKI…RQRLHRFDGQ (113 aa)) are Cytoplasmic-facing. Positions 269 to 284 (SEEEQLERALRASIWD) are ubiquitin-binding domain (UBD). The tract at residues 301–316 (PEEEMRRQRLHRFDGQ) is VCP/p97-interacting motif (VIM).

Belongs to the peptidase S54 family. Interacts with BIK and STEAP3. Interacts (via C-terminal domain) with VCP. Interacts with ubiquitin and ubiquitinated proteins. As to expression, expressed in intestine, lung, brain, kidney, epididymis and testis.

Its subcellular location is the endoplasmic reticulum membrane. The protein localises to the mitochondrion membrane. It carries out the reaction Cleaves type-1 transmembrane domains using a catalytic dyad composed of serine and histidine that are contributed by different transmembrane domains.. Inhibited by aprotinin. In terms of biological role, intramembrane-cleaving serine protease that cleaves single transmembrane or multi-pass membrane proteins in the hydrophobic plane of the membrane, luminal loops and juxtamembrane regions. Involved in regulated intramembrane proteolysis and the subsequent release of functional polypeptides from their membrane anchors. Functional component of endoplasmic reticulum-associated degradation (ERAD) for misfolded membrane proteins. Required for the degradation process of some specific misfolded endoplasmic reticulum (ER) luminal proteins. Participates in the transfer of misfolded proteins from the ER to the cytosol, where they are destroyed by the proteasome in a ubiquitin-dependent manner. Functions in BIK, MPZ, PKD1, PTCRA, RHO, STEAP3 and TRAC processing. Involved in the regulation of exosomal secretion; inhibits the TSAP6-mediated secretion pathway. Involved in the regulation of apoptosis; modulates BIK-mediated apoptotic activity. Also plays a role in the regulation of spermatogenesis; inhibits apoptotic activity in spermatogonia. The sequence is that of Rhomboid-related protein 4 (Rhbdd1) from Rattus norvegicus (Rat).